A 459-amino-acid chain; its full sequence is Aluminum-activated malate transporter 1 (459 aa).

The Extracellular segment spans residues 1–52 (MDIDHGRESDGEMVGTIASCGLLLHSLLAGLGRRAAGFARKVGGAAREDPRR). The next 2 membrane-spanning stretches (helical) occupy residues 53-73 (VAHSLKVGLALALVSVVYFVT) and 74-94 (PLFNGLGVSAIWAVLTVVVVM). Residues 95–108 (EYTVGATLSKGLNR) are Extracellular-facing. A helical transmembrane segment spans residues 109–129 (ALATLVAGCIAVGAHQLAELA). Over 130-137 (ERCGDQGE) the chain is Cytoplasmic. The chain crosses the membrane as a helical span at residues 138-158 (PIVLTVLVFFVASAATFLRFI). The Extracellular portion of the chain corresponds to 159–160 (PE). Residues 161-181 (IKAKYDYGVTIFILTFGLVAV) form a helical membrane-spanning segment. Residues 182 to 199 (SSYRVEELIQLAHQRFYT) lie on the Cytoplasmic side of the membrane. Residues 200 to 220 (IAVGVFICLCTTVFLFPVWAG) form a helical membrane-spanning segment. At 221–459 (EDVHKLASGN…DEPLPDVVIL (239 aa)) the chain is on the extracellular side.

It belongs to the aromatic acid exporter (TC 2.A.85) family. Detected in root tips.

It localises to the cell membrane. With respect to regulation, activated by external aluminum. The enhancement of malate transport is not due to alteration in the selectivity properties but is due to an increased anion permeability. Its function is as follows. Malate transporter critical for aluminum tolerance. Permeable to chloride, nitrate, sulfate and malate. The protein is Aluminum-activated malate transporter 1 (ALMT1) of Triticum aestivum (Wheat).